The following is a 1400-amino-acid chain: MNQEVMNLFNQQAQPQSFDQIKISISSPEKILSWSYGEIKKPETINYRTFKPERDGLFCARIFGPIKDYECLCGKYKRMKYKGVICEKCGVEVTLARVRRDRMGHIELAAPVAHIWFLKSLPSRIGLLLDMALKDLERILYFESYVVIEPGLTPLKERQLLSEEEYLRAQEEYGEDSFTAMIGAEAIRRILQDLNLEKIAADLRQEIATTTSDLKPKKLLKRLKIIEAFQLSGNKPEWMILTVVPVIPPDLRPLVPLDGGRFATSDLNDLYRRVINRNNRLKRLIELRAPDIIIRNEKRMLQEAVDALFDNGRRGRVITGANKRPLKSLADMLKGKQGRFRQNLLGKRVDYSGRSVIVVGPELKLHQCGLPKKMALELFKPFIYARLDAKGFSATVKQAKKLVEKEKPEVWDILDEVIREHPVMLNRAPTLHRLGIQAFEPKLIEGKAIQLHPLVCAAFNADFDGDQMAVHVPLSLEAQLEARVLMMSTNNILHPANGAPIIVPSQDIVLGLYYLSIVADGAPGEYKSNNPLNPMQGVYGDFGELEHALASRAVTLHSKVKWRWKGLGPDGEEVTRTYDTTPGRVILSSVLPRHPKVPFDVVNKLMTKKEISAMIDTVYRHCGQKESVIFCDRIMGLGFSHAFKAGISFGKDDMVVPENKWTIVDETRALVKDYEQQYQDGLITQGEKYNKVVDAWAKCSDRLASEMMNRISSVQKDEKGADKQVNSIYMMSHSGARGSPAQMKQLAAMRGLMAKPSGEIIESPIISNFKEGLDVLEYFNSTHGARKGLADTALKTANSGYLTRRLVDVAQDAVIREVDCGTDAGIRMRAIIDAGQVVATLATRILGRATAEDLVAQDGSIIVPKGQMIEERHLDAINKAGIQEVKIRSVLVCATKNGVCATCYGRDLARGTPVNQGEAVGVIAAQSIGEPGTQLTMRTFHIGGAAQIADSSFIESSFEGTVRIRNRGLARNSDGDLIAIGRNVAVVIVGPDGTERAVHRLQYGARVRVDEGDSIKRGQRIAEWDPYTRPILTEVDGIVAYEDLIDGQSITETTDESTGIAKRVVIDWRGSARTADLRPALAIHDQNGKVLKLPRGSDARALLPVEAIIGVDPGARVKAGDILARVSTESAKTRDITGGLPRVAELFEARRPKDAAIIAEKSGTISFGRDYKNKRRLSLTPHDGSEPVEYLIPKGKHIHLQDGDVVEVGDFIVDGNPAPHDILAIKGVEELAAYLVNEIQEVYRLQGVSINDKHIEVIVRQMLQKVEITDSGDSEILTGDQIDRTELQEINEQLVSEGKKPVQGVPVLLGITKASLQTRSFISAASFQETTRVLTEAAVNGKVDTLEGLKENVIVGSLIPAGTGAMIADIKSIARRRDELIMAQKTAESGAALQELPAAE.

Residues C71, C73, C86, and C89 each contribute to the Zn(2+) site. Mg(2+) contacts are provided by D462, D464, and D466. Zn(2+) contacts are provided by C820, C893, C900, and C903.

It belongs to the RNA polymerase beta' chain family. As to quaternary structure, the RNAP catalytic core consists of 2 alpha, 1 beta, 1 beta' and 1 omega subunit. When a sigma factor is associated with the core the holoenzyme is formed, which can initiate transcription. It depends on Mg(2+) as a cofactor. Zn(2+) serves as cofactor.

The enzyme catalyses RNA(n) + a ribonucleoside 5'-triphosphate = RNA(n+1) + diphosphate. Its function is as follows. DNA-dependent RNA polymerase catalyzes the transcription of DNA into RNA using the four ribonucleoside triphosphates as substrates. This is DNA-directed RNA polymerase subunit beta' from Methylobacterium sp. (strain 4-46).